We begin with the raw amino-acid sequence, 1057 residues long: Carbamoyl phosphate synthase large chain (1057 aa).

The tract at residues 1–401 (MPKRDDIQTI…SLLKAIRSLE (401 aa)) is carboxyphosphate synthetic domain. ATP contacts are provided by arginine 129, arginine 169, glycine 175, glycine 176, lysine 208, isoleucine 210, glutamate 215, glycine 241, isoleucine 242, histidine 243, glutamine 284, and glutamate 298. Positions 133–327 (RSLMNDLNVP…IAKLAAKIAV (195 aa)) constitute an ATP-grasp 1 domain. 3 residues coordinate Mg(2+): glutamine 284, glutamate 298, and asparagine 300. Mn(2+)-binding residues include glutamine 284, glutamate 298, and asparagine 300. The oligomerization domain stretch occupies residues 402 to 546 (YGVHHLGLPN…YGTYETENES (145 aa)). Positions 547-929 (IVTDKEKILV…ALYKGLTGSG (383 aa)) are carbamoyl phosphate synthetic domain. The 191-residue stretch at 671-861 (EALLHTIDVP…MAQLAMQAIM (191 aa)) folds into the ATP-grasp 2 domain. Arginine 707, arginine 746, leucine 748, glutamate 752, glycine 777, valine 778, histidine 779, serine 780, glutamine 820, and glutamate 832 together coordinate ATP. Mg(2+)-binding residues include glutamine 820, glutamate 832, and asparagine 834. Residues glutamine 820, glutamate 832, and asparagine 834 each contribute to the Mn(2+) site. One can recognise an MGS-like domain in the interval 930–1057 (VEVKDHGTVL…ESMTFSMRTM (128 aa)). Residues 930–1057 (VEVKDHGTVL…ESMTFSMRTM (128 aa)) are allosteric domain.

It belongs to the CarB family. Composed of two chains; the small (or glutamine) chain promotes the hydrolysis of glutamine to ammonia, which is used by the large (or ammonia) chain to synthesize carbamoyl phosphate. Tetramer of heterodimers (alpha,beta)4. It depends on Mg(2+) as a cofactor. Requires Mn(2+) as cofactor.

It carries out the reaction hydrogencarbonate + L-glutamine + 2 ATP + H2O = carbamoyl phosphate + L-glutamate + 2 ADP + phosphate + 2 H(+). The enzyme catalyses hydrogencarbonate + NH4(+) + 2 ATP = carbamoyl phosphate + 2 ADP + phosphate + 2 H(+). It participates in amino-acid biosynthesis; L-arginine biosynthesis; carbamoyl phosphate from bicarbonate: step 1/1. It functions in the pathway pyrimidine metabolism; UMP biosynthesis via de novo pathway; (S)-dihydroorotate from bicarbonate: step 1/3. Large subunit of the glutamine-dependent carbamoyl phosphate synthetase (CPSase). CPSase catalyzes the formation of carbamoyl phosphate from the ammonia moiety of glutamine, carbonate, and phosphate donated by ATP, constituting the first step of 2 biosynthetic pathways, one leading to arginine and/or urea and the other to pyrimidine nucleotides. The large subunit (synthetase) binds the substrates ammonia (free or transferred from glutamine from the small subunit), hydrogencarbonate and ATP and carries out an ATP-coupled ligase reaction, activating hydrogencarbonate by forming carboxy phosphate which reacts with ammonia to form carbamoyl phosphate. The protein is Carbamoyl phosphate synthase large chain of Staphylococcus haemolyticus (strain JCSC1435).